The chain runs to 599 residues: Sodium-dependent phosphate transport protein 2C (599 aa).

The Cytoplasmic portion of the chain corresponds to 1–76 (MPSSLPGSQV…RRVAGSVLKA (76 aa)). At S4 the chain carries Phosphoserine. A helical transmembrane segment spans residues 77–97 (CGLLGSLYFFICSLDVLSSAF). Residues 98–111 (QLLGSKVAGDIFKD) lie on the Extracellular side of the membrane. The helical transmembrane segment at 112-132 (NVVLSNPVAGLVIGVLVTALV) threads the bilayer. The Cytoplasmic portion of the chain corresponds to 133 to 188 (QSSSTSSSIVVSMVAAKLLTVRVSVPIIMGVNVGTSITSTLVSMAQSGDRDEFQRA). The chain crosses the membrane as a helical span at residues 189 to 209 (FSGSAVHGIFNWLTVLVLLPL). The Extracellular portion of the chain corresponds to 210 to 322 (ESATALLERL…FAGTELTDLA (113 aa)). N-linked (GlcNAc...) asparagine glycosylation is found at N265, N268, N286, and N299. An intrachain disulfide couples C276 to C309. Residues 323–343 (VGCILLAGSLLVLCGCLVLIV) form a helical membrane-spanning segment. The Cytoplasmic segment spans residues 344 to 367 (KLLNSVLRGRVAQVVRTVINADFP). The chain crosses the membrane as a helical span at residues 368–388 (FPLGWLGGYLAVLAGAGLTFA). At 389–445 (LQSSSVFTAAVVPLMGVGVISLDRAYPLLLGSNIGTTTTALLAALASPADRMLSALQ) the chain is on the extracellular side. The helical transmembrane segment at 446-466 (VALIHFFFNLAGILLWYLVPA) threads the bilayer. Topologically, residues 467–485 (LRLPIPLARHFGVVTARYR) are cytoplasmic. The helical transmembrane segment at 486 to 506 (WVAGVYLLLGFLLLPLAAFGL) threads the bilayer. At 507–510 (SLAG) the chain is on the extracellular side. The chain crosses the membrane as a helical span at residues 511-531 (GMELAAVGGPLVGLVLLVILV). Residues 532-599 (TVLQRRRPAW…NPEILASQQL (68 aa)) lie on the Cytoplasmic side of the membrane.

It belongs to the SLC34A transporter family. In terms of tissue distribution, expressed only in the kidney.

The protein localises to the apical cell membrane. It catalyses the reaction 2 Na(+)(out) + phosphate(out) = 2 Na(+)(in) + phosphate(in). In terms of biological role, involved in actively transporting phosphate into cells via Na(+) cotransport in the renal brush border membrane. The cotransport has a Na(+):Pi stoichiometry of 2:1 and is electroneutral. In Homo sapiens (Human), this protein is Sodium-dependent phosphate transport protein 2C (SLC34A3).